The primary structure comprises 255 residues: uncharacterized protein (255 aa).

A signal peptide spans 1–22; that stretch reads MNILSPIIIIIILIVLFYVMRM.

This is an uncharacterized protein from Acanthamoeba polyphaga (Amoeba).